We begin with the raw amino-acid sequence, 189 residues long: Shikimate kinase (189 aa).

Residue Gly11 to Ala16 coordinates ATP. Ser15 serves as a coordination point for Mg(2+). Substrate-binding residues include Asp33, Arg57, and Gly79. ATP is bound at residue Arg117. Residue Arg135 coordinates substrate.

It belongs to the shikimate kinase family. Monomer. Mg(2+) serves as cofactor.

The protein localises to the cytoplasm. The enzyme catalyses shikimate + ATP = 3-phosphoshikimate + ADP + H(+). Its pathway is metabolic intermediate biosynthesis; chorismate biosynthesis; chorismate from D-erythrose 4-phosphate and phosphoenolpyruvate: step 5/7. Functionally, catalyzes the specific phosphorylation of the 3-hydroxyl group of shikimic acid using ATP as a cosubstrate. The protein is Shikimate kinase of Desulforudis audaxviator (strain MP104C).